The following is a 574-amino-acid chain: MSCPIHPRRLFLCLLISLTFFVVDPSSQHIEVKKKQMREKVREMFYHAYDNYMTYAFPHDELKPLTKSFTDSLSELGNLKLEHLPTDYNGSAVTLVESLSSLAILGNSTEFEKGVLWLSENLTFDIDARVNLFECNIRVLGGLISAHLLAIDPNNRLIQGSYNNQLLRLAEDLGKRFLPAFETPTGLPYAWINLKNGVMENETTETSTSGCGSLVLEMGALSRLTGDPRFESAALRALRQLWRMRSSLDLLGTTLDVVTGEWIEYSSSIGAGVDSFYEYLLKAYILFGKEDYWRMFHSAYLASQKYFRHGPWYHEANMWSGKPTYWQLTSLQAFWPGLQVLVGDIAAANSSHREFFHVWEKFGVLPERYLLDHQIIHPTMKYYPLRPELAESTFYLYQATKDPWYLDVGESMVKSLNLYTKVPGGFASVRDVTTMQLEDHQHSFFLAETCKYLYLLFDDSFVAKRNYIFTTEGHPIQVVSSWHEKLPETYFSGNWTLSKSGAWESRASALSLQVCPLISLNSRHPEQQRESACHVLDEQINHKCWSNKECGVDATTCRLRTCSGVGYCGLWNPL.

At 1 to 9 (MSCPIHPRR) the chain is on the cytoplasmic side. The helical; Signal-anchor for type II membrane protein transmembrane segment at 10–26 (LFLCLLISLTFFVVDPS) threads the bilayer. The Lumenal portion of the chain corresponds to 27–574 (SQHIEVKKKQ…VGYCGLWNPL (548 aa)). N-linked (GlcNAc...) asparagine glycans are attached at residues Asn89, Asn107, and Asn121. Glu134 acts as the Proton donor in catalysis. A glycan (N-linked (GlcNAc...) asparagine) is linked at Asn201. Residue Asp274 is part of the active site. A glycan (N-linked (GlcNAc...) asparagine) is linked at Asn349. The active-site Proton donor is the Glu367. Glu388 is a catalytic residue. Ca(2+) is bound at residue Thr471. Residue Asn494 is glycosylated (N-linked (GlcNAc...) asparagine).

It belongs to the glycosyl hydrolase 47 family. The cofactor is Ca(2+).

Its subcellular location is the endoplasmic reticulum membrane. It participates in protein modification; protein glycosylation. Functionally, can convert Man(9)GlcNAc(2) and Man(8)GlcNAc(2) into N-glycans with a terminal alpha-1,6-linked Man residue in the C-branch. Functions in the formation of unique N-glycan structures that are specifically recognized by components of the endoplasmic reticulum-associated degradation (ERAD) machinery, which leads to the degradation of misfolded glycoproteins. Most likely generates N-glycan signal on misfolded glycoproteins that is subsequently recognized by OS9. Required for ERAD of the heavily glycosylated and misfolded BRI1 variants BRI1-5 and BRI1-9. Does not seem to play role in N-glycan processing of correctly folded proteins destined for secretion. This Arabidopsis thaliana (Mouse-ear cress) protein is Alpha-mannosidase I MNS5 (MNS5).